A 576-amino-acid chain; its full sequence is Arginine--tRNA ligase (576 aa).

A 'HIGH' region motif is present at residues 123 to 133; the sequence is PNIGKEMHVGH.

Belongs to the class-I aminoacyl-tRNA synthetase family. In terms of assembly, monomer.

The protein localises to the cytoplasm. The catalysed reaction is tRNA(Arg) + L-arginine + ATP = L-arginyl-tRNA(Arg) + AMP + diphosphate. In Wigglesworthia glossinidia brevipalpis, this protein is Arginine--tRNA ligase.